The following is a 333-amino-acid chain: UDP-3-O-acylglucosamine N-acyltransferase (333 aa).

His-225 serves as the catalytic Proton acceptor.

It belongs to the transferase hexapeptide repeat family. LpxD subfamily. As to quaternary structure, homotrimer.

The enzyme catalyses a UDP-3-O-[(3R)-3-hydroxyacyl]-alpha-D-glucosamine + a (3R)-hydroxyacyl-[ACP] = a UDP-2-N,3-O-bis[(3R)-3-hydroxyacyl]-alpha-D-glucosamine + holo-[ACP] + H(+). The protein operates within bacterial outer membrane biogenesis; LPS lipid A biosynthesis. Catalyzes the N-acylation of UDP-3-O-acylglucosamine using 3-hydroxyacyl-ACP as the acyl donor. Is involved in the biosynthesis of lipid A, a phosphorylated glycolipid that anchors the lipopolysaccharide to the outer membrane of the cell. The chain is UDP-3-O-acylglucosamine N-acyltransferase from Paracidovorax citrulli (strain AAC00-1) (Acidovorax citrulli).